A 530-amino-acid chain; its full sequence is MSSLRPEEARKLATAASVSPLSNCQFSGVVISSIADEQKLEFTNKYKGSCTLLCSYDSQGVVLRVVSDDDQSHVLKEYMIAADTDAAQMGRRSYAVSLDADNLVLRFASDQDQQLFRKVVENVKHLRPKSVFSQRTEESSASQYFQFYGYLSQQQNMMQDYVRTSTYQRAILGNAVDFQDKIVLDVGAGSGILSFFAVQAGAAKVYAIEASNMAQYAQQLVESNNVQHKISVIPGKIEEIELPEKVDVIISEPMGYMLYNERMLETYLHARKWLKPQGKMYPTHGDLHIAPFSDESLYSEQYNKANFWYQSAFHGVDLTTLHKEGMKEYFRQPIVDTFDIRICMAKSVRHVCDFLNDKEDDLHLISIPLEFQILQTGICHGLAFWFDVEFSGSSQNVWLSTSPTAPLTHWYQVRCLLPMPIFIKQGQTLTGRVLLEANRRQSYDVTIDLHIEGTLISSSNTLDLKNPYFRYTGAPVQAPPGTSTQSPSEQYWTQVDTQGSRNSSSMLNGGLSVNGIGDGMDITHGLMHPH.

The region spanning 141 to 450 (ASQYFQFYGY…QSYDVTIDLH (310 aa)) is the SAM-dependent MTase PRMT-type domain. Residues Q154, R163, G187, E209, E238, and T266 each coordinate S-adenosyl-L-methionine. The residue at position 501 (R501) is an Asymmetric dimethylarginine; by autocatalysis.

Belongs to the class I-like SAM-binding methyltransferase superfamily. Protein arginine N-methyltransferase family. As to quaternary structure, homodimer. In terms of processing, the dimethylated protein is the major form.

It is found in the cytoplasm. The protein localises to the nucleus. It catalyses the reaction L-arginyl-[protein] + 2 S-adenosyl-L-methionine = N(omega),N(omega)-dimethyl-L-arginyl-[protein] + 2 S-adenosyl-L-homocysteine + 2 H(+). Functionally, methylates (mono- and asymmetric dimethylation) the guanidino nitrogens of arginyl residues in proteins. May methylate histone H3 at 'Arg-17' and activate transcription via chromatin remodeling. This is Histone-arginine methyltransferase CARMER (Art4) from Drosophila yakuba (Fruit fly).